Consider the following 492-residue polypeptide: 56 kDa U1 small nuclear ribonucleoprotein component (492 aa).

Residues 1 to 15 (MRPRRRGLAYHHTKP) are compositionally biased toward basic residues. 2 disordered regions span residues 1 to 35 (MRPRRRGLAYHHTKPKGQLSQGHYPTTSNDGQRRK) and 300 to 371 (DQFP…NKPG). Residues 18–30 (QLSQGHYPTTSND) show a composition bias toward polar residues. The segment covering 310–321 (SNSPSSNSISSS) has biased composition (low complexity). A compositionally biased stretch (polar residues) spans 329–353 (TSYQTQPQRHAVNKPSNVLNSSNRH).

Component of the 18S U1 snRNP particle, a subcomplex of the spliceosome. Interacts with the nuclear cap-binding complex CBC1-CBC2 (yCBC). Directly contacts intronic sequences of substrate pre-RNA.

The protein localises to the nucleus. Component of the U1 snRNP particle, which recognizes and binds the 5'-splice site of pre-mRNA. Together with other non-snRNP factors, U1 snRNP forms the spliceosomal commitment complex, that targets pre-mRNA to the splicing pathway. The chain is 56 kDa U1 small nuclear ribonucleoprotein component (SNU56) from Saccharomyces cerevisiae (strain ATCC 204508 / S288c) (Baker's yeast).